A 69-amino-acid polypeptide reads, in one-letter code: Small, acid-soluble spore protein I (69 aa).

It belongs to the SspI family.

The protein resides in the spore core. In Bacillus anthracis (strain A0248), this protein is Small, acid-soluble spore protein I.